Consider the following 692-residue polypeptide: Elongation factor G (692 aa).

One can recognise a tr-type G domain in the interval 8–282; the sequence is ENTRNIGIMA…AVIDYLPSPL (275 aa). GTP-binding positions include 17–24, 81–85, and 135–138; these read AHIDAGKT, DTPGH, and NKMD.

This sequence belongs to the TRAFAC class translation factor GTPase superfamily. Classic translation factor GTPase family. EF-G/EF-2 subfamily.

Its subcellular location is the cytoplasm. Functionally, catalyzes the GTP-dependent ribosomal translocation step during translation elongation. During this step, the ribosome changes from the pre-translocational (PRE) to the post-translocational (POST) state as the newly formed A-site-bound peptidyl-tRNA and P-site-bound deacylated tRNA move to the P and E sites, respectively. Catalyzes the coordinated movement of the two tRNA molecules, the mRNA and conformational changes in the ribosome. The polypeptide is Elongation factor G (Bacillus cereus (strain ZK / E33L)).